The chain runs to 462 residues: MRIPVDTSTSRRFTPPSTTLSPGKMSEPIPLNIADSSAALVGKLRSTDRNMVEVLSDHPGELVRTDSPNFLCSVLPTHWRCNKTLPIAFKVVALGEVPDGTLVTVMAGNDENYSAELRNATAAMKSQVARFNDLRFVGRSGRGKSFTLTITVFTNPPQVATYHRAIKITVDGPREPRRHRQKLDEQTKPGNLSFSERLSELEHFRRTAMRVSPHHPNPMPNPRATLNHSAAFNPQPQGQIQVADTRQVQASPPWSYDQSYQYLGSIATQSVHPATPISPGRASSMTSLSAELSSRLSGASDLTAFSDPRVGIDRQFSTLPSISDPRMHYPGAFTYTPTPVTSGIGIGMSAMTSATRYHTYLPPPYPGSSQAQSNPFQTSSPSYHLYYGTSAGSYHQFSMMSGGERSPPRILPPCTNASTGSTLLNPNLPNQSDVVEAEGSHSNSPTNMGSTPRLEEAVWRPY.

A disordered region spans residues 1 to 27 (MRIPVDTSTSRRFTPPSTTLSPGKMSE). Over residues 7 to 22 (TSTSRRFTPPSTTLSP) the composition is skewed to low complexity. The 129-residue stretch at 50-178 (NMVEVLSDHP…TVDGPREPRR (129 aa)) folds into the Runt domain. The interval 80 to 84 (RCNKT) is interaction with DNA. The chloride site is built by asparagine 112, glutamate 116, arginine 139, and valine 170. 2 interaction with DNA regions span residues 135-143 (RFVGRSGRG) and 168-177 (ITVDGPREPR). The segment at 399–462 (MMSGGERSPP…RLEEAVWRPY (64 aa)) is disordered. Composition is skewed to polar residues over residues 415-433 (TNASTGSTLLNPNLPNQSD) and 440-450 (SHSNSPTNMGS). Residues 453 to 462 (RLEEAVWRPY) are compositionally biased toward basic and acidic residues.

Heterodimer with cbfb. runx1 binds DNA as a monomer and through the Runt domain. DNA-binding is increased by heterodimerization. Shows a complex and dynamic expression pattern. In stage 14-24 embryos, expressed in a subset of neuroblasts in the lateral stripe of the neural plate. In late neurula stages, expression begins in the olfactory placodes. Also expressed in structures that play a role in blood formation: at stage 14, expressed on the anterior ventral side of the embryo in the anterior endomesoderm. As the embryo elongates, expression shifts gradually to a V-shaped expression pattern in the presumptive ventral blood island.

It localises to the nucleus. In terms of biological role, involved in primitive hematopoiesis in the embryo. This Xenopus laevis (African clawed frog) protein is Runt-related transcription factor 1.